The sequence spans 1938 residues: Myosin-1 (1938 aa).

A Myosin N-terminal SH3-like domain is found at 33 to 82 (DAKTSVFVADPKESFVKATVQSREGGKVTAKTEAGATVTVKEDQCFPMNP). 2 positions are modified to phosphothreonine: Thr-64 and Thr-69. A Myosin motor domain is found at 86-781 (DKIEDMAMMT…LLGLLEEMRD (696 aa)). Lys-130 carries the N6,N6,N6-trimethyllysine modification. ATP is bound at residue 179-186 (GESGAGKT). Position 389 is a phosphotyrosine (Tyr-389). Thr-419 is modified (phosphothreonine). The residue at position 424 (Tyr-424) is a Phosphotyrosine. The residue at position 625 (Ser-625) is a Phosphoserine. The actin-binding stretch occupies residues 658–680 (LNKLMTNLRSTHPHFVRCIIPNE). At His-756 the chain carries Pros-methylhistidine. Positions 760-774 (KFGHTKVFFKAGLLG) are actin-binding. An IQ domain is found at 784–813 (LAQIITRTQARCRGFLARVEYQRMVERRES). Positions 842 to 1938 (LLKSAETEKE…EVHTKIISEE (1097 aa)) form a coiled coil. Phosphoserine is present on residues Ser-1091 and Ser-1095. Disordered stretches follow at residues 1124 to 1146 (EIEAERASRAKAEKQRSDLSREL) and 1152 to 1171 (RLEEAGGATSAQIEMNKKRE). Residues 1127 to 1146 (AERASRAKAEKQRSDLSREL) show a composition bias toward basic and acidic residues. 2 positions are modified to phosphoserine: Ser-1161 and Ser-1236. At Thr-1240 the chain carries Phosphothreonine. A Phosphoserine modification is found at Ser-1242. Thr-1254 carries the post-translational modification Phosphothreonine. Ser-1260 carries the post-translational modification Phosphoserine. Thr-1285 is subject to Phosphothreonine. 3 positions are modified to phosphoserine: Ser-1291, Ser-1302, and Ser-1305. Tyr-1463 carries the phosphotyrosine modification. Thr-1466 is modified (phosphothreonine). Ser-1473 is subject to Phosphoserine. Tyr-1491 bears the Phosphotyrosine mark. Position 1494 is a phosphoserine (Ser-1494). Residue Thr-1500 is modified to Phosphothreonine. Position 1513 is a phosphoserine (Ser-1513). Thr-1516 carries the phosphothreonine modification. Phosphoserine occurs at positions 1541, 1553, 1573, 1713, and 1725. Phosphothreonine is present on residues Thr-1729 and Thr-1735. Residue Ser-1738 is modified to Phosphoserine.

This sequence belongs to the TRAFAC class myosin-kinesin ATPase superfamily. Myosin family. As to quaternary structure, muscle myosin is a hexameric protein that consists of 2 heavy chain subunits (MHC), 2 alkali light chain subunits (MLC) and 2 regulatory light chain subunits (MLC-2). Interacts with SLC26A5.

The protein localises to the cytoplasm. Its subcellular location is the myofibril. In terms of biological role, required for normal hearing. It plays a role in cochlear amplification of auditory stimuli, likely through the positive regulation of prestin (SLC26A5) activity and outer hair cell (OHC) electromotility. This Equus caballus (Horse) protein is Myosin-1 (MYH1).